A 349-amino-acid polypeptide reads, in one-letter code: MDENKQKALAAALGQIEKQFGKGSIMRLGDNRAMDVETISTGSLSLDIALGAGGLPMGRIVEIFGPESSGKTTLTLELIAAAQREGKTCAFIDAEHALDPVYAKKLGVNIDQLLVSQPDTGEQALEICDALARSGAVDVIVVDSVAALTPKAEIEGEMGDSHMGLQARMLSQAMRKLTGNLKQSNCMCIFINQIRMKIGVMFGNPETTTGGNALKFYASVRLDIRRTGAIKEGDEVVGNETRIKVVKNKIAAPFKEANTQIMYGQGFNREGELIDLGVKCKLIEKSGAWYSYNGDKIGQGKANACKYLKENVDVAKVLDTKLREMLLSPANINDESAELVEEMPEQEEF.

An ATP-binding site is contributed by 65 to 72; it reads GPESSGKT.

The protein belongs to the RecA family.

It localises to the cytoplasm. Its function is as follows. Can catalyze the hydrolysis of ATP in the presence of single-stranded DNA, the ATP-dependent uptake of single-stranded DNA by duplex DNA, and the ATP-dependent hybridization of homologous single-stranded DNAs. It interacts with LexA causing its activation and leading to its autocatalytic cleavage. The sequence is that of Protein RecA from Vibrio vulnificus (strain CMCP6).